The following is a 575-amino-acid chain: Intermediate filament protein ifd-1 (575 aa).

Positions 1–56 (MSKLNPRVAHNPVLSRIIESGRTNLPSGITSAGSLSAYAQAAAVTIRDNRDREKRE) are head. One can recognise an IF rod domain in the interval 53-406 (EKREIADLNN…KLMEQAENLR (354 aa)). Residues 57–88 (IADLNNRLARYVEKVRFLEAQNRVLENDIGLF) form a coil 1A region. The interval 89 to 102 (RQAAHIHTGKVRDY) is linker 1. The tract at residues 103 to 240 (YDAEKTSLAT…STHEIAIREE (138 aa)) is coil 1B. Positions 241 to 258 (INKARRDSTDKNREFFHR) are linker 12. The interval 259–408 (ELHMSMKEIR…MEQAENLRTS (150 aa)) is coil 2. The segment at 409–572 (YQSDFVIDTP…DEVGWYAHVS (164 aa)) is tail. The 117-residue stretch at 459-575 (NTQQFRSYGK…GWYAHVSYSH (117 aa)) folds into the LTD domain.

It belongs to the intermediate filament family.

Its subcellular location is the cytoplasm. Cytoplasmic intermediate filaments provide mechanical strength to cells. Not essential protein. This Caenorhabditis elegans protein is Intermediate filament protein ifd-1.